The following is a 413-amino-acid chain: MAKEKTHMNLAFIGHVDHGKSTLVGHLLLLEGAIAEQQLDEGEDKFRFVMDKLGEERERGVTIDLAHAKFETQKYEYTVVDCPGHRDFVKNMITGASQADAAVLVVAANDGIMPQTKEHIFLSRTLGINQLIIAINKMDVVDYSEDKFNELKEELGALISTVGFKPSDVPFIPVSAFEGDNISEKSSNTPWYKGNTLVQELDALDEPDKPVDLPLRLPIQDVYSITGVGTVPVGRIETGILKTAENIAFEPAGVTGEVKSIEMHHEVLDKAEPGDNVGFNVRGVGKNDIKRGDVAGTTQNPPSVAKEFKAQIVVLQHPGVMTVGYTPVFHAHTAQVACTFLSLDVKLDPATGQPKEENPDFLKTGDAALVTIKPTKPMVIENIKEIPHMGRFAIRDMGQTVAAGMCIDITDAK.

One can recognise a tr-type G domain in the interval 5 to 211 (KTHMNLAFIG…DALDEPDKPV (207 aa)). Residues 14–21 (GHVDHGKS) are G1. 14-21 (GHVDHGKS) lines the GTP pocket. Residue S21 coordinates Mg(2+). Residues 60-64 (GVTID) are G2. The segment at 81–84 (DCPG) is G3. Residues 81-85 (DCPGH) and 136-139 (NKMD) each bind GTP. Positions 136–139 (NKMD) are G4. The segment at 175–177 (SAF) is G5.

Belongs to the TRAFAC class translation factor GTPase superfamily. Classic translation factor GTPase family. EF-Tu/EF-1A subfamily.

The protein localises to the cytoplasm. The enzyme catalyses GTP + H2O = GDP + phosphate + H(+). Functionally, GTP hydrolase that promotes the GTP-dependent binding of aminoacyl-tRNA to the A-site of ribosomes during protein biosynthesis. In Methanosphaera stadtmanae (strain ATCC 43021 / DSM 3091 / JCM 11832 / MCB-3), this protein is Elongation factor 1-alpha.